Consider the following 86-residue polypeptide: MANIKSQMKRIRTNEAARKRNQSVKSALRTAIRSFREAAEAGDKDKAAERLQFASRKLDKAASKGVIHPNQAANKKSALALAFNKL.

The interval 1–25 (MANIKSQMKRIRTNEAARKRNQSVK) is disordered.

This sequence belongs to the bacterial ribosomal protein bS20 family.

Binds directly to 16S ribosomal RNA. This chain is Small ribosomal subunit protein bS20, found in Nocardia farcinica (strain IFM 10152).